Consider the following 295-residue polypeptide: Ethanolamine ammonia-lyase small subunit (295 aa).

Residues Val207, Glu228, and Cys258 each contribute to the adenosylcob(III)alamin site.

It belongs to the EutC family. In terms of assembly, the basic unit is a heterodimer which dimerizes to form tetramers. The heterotetramers trimerize; 6 large subunits form a core ring with 6 small subunits projecting outwards. Adenosylcob(III)alamin serves as cofactor.

It is found in the bacterial microcompartment. The enzyme catalyses ethanolamine = acetaldehyde + NH4(+). Its pathway is amine and polyamine degradation; ethanolamine degradation. Its function is as follows. Catalyzes the deamination of various vicinal amino-alcohols to oxo compounds. Allows this organism to utilize ethanolamine as the sole source of nitrogen and carbon in the presence of external vitamin B12. This is Ethanolamine ammonia-lyase small subunit from Shigella sonnei (strain Ss046).